A 579-amino-acid polypeptide reads, in one-letter code: MFS-type transporter olcL (579 aa).

Positions 1-24 (MANIGGSNAVSSAQGSQISDSPTT) are enriched in polar residues. Residues 1-75 (MANIGGSNAV…GFGEDGCQSD (75 aa)) form a disordered region. The span at 25–35 (VDDRLDEHKET) shows a compositional bias: basic and acidic residues. Polar residues predominate over residues 36 to 54 (STQSIDHSENITQSPTSLQ). N-linked (GlcNAc...) asparagine glycosylation occurs at N45. 9 helical membrane passes run 85–105 (LAAI…DNTI), 121–141 (GDVG…TLVF), 159–179 (AVFE…GLII), 183–203 (IAGL…SQSV), 214–234 (LVGG…GAFT), 241–261 (WCFY…LLFF), 282–302 (LIGL…LQWG), 310–330 (SGRI…FIMV), and 355–375 (LFNF…PVWF). N380 is a glycosylation site (N-linked (GlcNAc...) asparagine). 5 consecutive transmembrane segments (helical) span residues 388–408 (LMNL…GYGV), 411–431 (IGYY…GAGL), 439–459 (FGPS…GLGL), 479–501 (IAIV…QNVF), and 553–573 (FYVG…IQWI).

This sequence belongs to the major facilitator superfamily. TCR/Tet family.

The protein resides in the peroxisome membrane. In terms of biological role, MFS-type transporter; part of the gene cluster that mediates the biosynthesis of 15-deoxyoxalicine B. The first step of the pathway is the synthesis of nicotinyl-CoA from nicotinic acid by the nicotinic acid-CoA ligase olcI. Nicotinyl-CoA is then a substrate of polyketide synthase olcA to produce 4-hydroxy-6-(3-pyridinyl)-2H-pyran-2-one (HPPO) which is further prenylated by the polyprenyl transferase olcH to yield geranylgeranyl-HPPO. Geranylgeranyl pyrophosphate is provided by the cluster-specific geranylgeranyl pyrophosphate synthase olcC. The FAD-dependent monooxygenase olcE catalyzes the epoxidation of geranylgeranyl-HPPO and the terpene cyclase olcD catalyzes the cyclization of the terpenoid component, resulting in the formation of the tricyclic terpene moiety seen in predecaturin E. The cytochrome P450 monooxygenase then catalyzes the allylic oxidation of predecaturin E, which is followed by spirocylization with concomitant loss of one molecule of water to form decaturin E. Decaturin E is the substrate of the cytochrome P450 monooxygenase olcJ which hydroxylates it at the C-29 position to form decaturin F. The short-chain dehydrogenase/reductase olcF may catalyze the oxidation of decaturin F to generate the 29-hydroxyl-27-one intermediate, and subsequent hemiacetal formation probably leads to the formation of decaturin C. The dioxygenase olcK may be a peroxisomal enzyme that catalyzes the hydroxylation of decaturin C into decaturin A once decaturin C is shuttled into the peroxisome by the MFS transporter olcL. Finally the cytochrome P450 monooxygenase olcB catalyzes the oxidative rearrangement to yield 15-deoxyoxalicine B. In the absence of olcJ, decaturin E may be shunted to a pathway in which it is oxidized to a ketone, possibly by olcF, to form decaturin D, which undergoes further allylic oxidation to yield decaturin G. Moreover, in the absence of oclK or oclL, oclB can convert decaturin C into 15-deoxyoxalicine A. The polypeptide is MFS-type transporter olcL (Penicillium canescens).